A 434-amino-acid polypeptide reads, in one-letter code: Ribosomal protein uS12 methylthiotransferase RimO (434 aa).

An MTTase N-terminal domain is found at 4-122 (NRVDVITLGC…LISHLGKSYY (119 aa)). [4Fe-4S] cluster contacts are provided by Cys-13, Cys-51, Cys-85, Cys-146, Cys-150, and Cys-153. A Radical SAM core domain is found at 132–363 (TTPRHYAYLK…MAVQERISAA (232 aa)). Residues 366-434 (EAKIGSRLHV…PFDLYARIVD (69 aa)) form the TRAM domain.

This sequence belongs to the methylthiotransferase family. RimO subfamily. [4Fe-4S] cluster serves as cofactor.

The protein resides in the cytoplasm. It catalyses the reaction L-aspartate(89)-[ribosomal protein uS12]-hydrogen + (sulfur carrier)-SH + AH2 + 2 S-adenosyl-L-methionine = 3-methylsulfanyl-L-aspartate(89)-[ribosomal protein uS12]-hydrogen + (sulfur carrier)-H + 5'-deoxyadenosine + L-methionine + A + S-adenosyl-L-homocysteine + 2 H(+). In terms of biological role, catalyzes the methylthiolation of an aspartic acid residue of ribosomal protein uS12. In Porphyromonas gingivalis (strain ATCC BAA-308 / W83), this protein is Ribosomal protein uS12 methylthiotransferase RimO.